A 111-amino-acid chain; its full sequence is Viscotoxin-A3 (111 aa).

An N-terminal signal peptide occupies residues 1 to 26 (MEVVRGSSLVLLVLLLGALLVSQVES). Disulfide bonds link C29–C66, C30–C58, and C42–C52. The propeptide at 73 to 111 (FYCTLGCESSQCATNSNGDAEAVRCKTACSDLCQDVDDA) is acidic domain.

The protein belongs to the plant thionin (TC 1.C.44) family.

It is found in the secreted. Its function is as follows. Thionins are small plant proteins which are toxic to animal cells. They seem to exert their toxic effect at the level of the cell membrane. Their precise function is not known. This Viscum album (European mistletoe) protein is Viscotoxin-A3 (THI2.1).